We begin with the raw amino-acid sequence, 348 residues long: S-adenosylmethionine:tRNA ribosyltransferase-isomerase (348 aa).

Belongs to the QueA family. As to quaternary structure, monomer.

It is found in the cytoplasm. It carries out the reaction 7-aminomethyl-7-carbaguanosine(34) in tRNA + S-adenosyl-L-methionine = epoxyqueuosine(34) in tRNA + adenine + L-methionine + 2 H(+). Its pathway is tRNA modification; tRNA-queuosine biosynthesis. Transfers and isomerizes the ribose moiety from AdoMet to the 7-aminomethyl group of 7-deazaguanine (preQ1-tRNA) to give epoxyqueuosine (oQ-tRNA). The chain is S-adenosylmethionine:tRNA ribosyltransferase-isomerase from Amoebophilus asiaticus (strain 5a2).